The chain runs to 519 residues: Protein nucleotidyltransferase YdiU (519 aa).

ATP is bound by residues Gly100, Gly102, Arg103, Lys123, Asp135, Gly136, Arg193, and Arg200. Asp270 serves as the catalytic Proton acceptor. Mg(2+) contacts are provided by Asn271 and Asp280. Asp280 contacts ATP.

The protein belongs to the SELO family. It depends on Mg(2+) as a cofactor. Mn(2+) serves as cofactor.

It catalyses the reaction L-seryl-[protein] + ATP = 3-O-(5'-adenylyl)-L-seryl-[protein] + diphosphate. It carries out the reaction L-threonyl-[protein] + ATP = 3-O-(5'-adenylyl)-L-threonyl-[protein] + diphosphate. The enzyme catalyses L-tyrosyl-[protein] + ATP = O-(5'-adenylyl)-L-tyrosyl-[protein] + diphosphate. The catalysed reaction is L-histidyl-[protein] + UTP = N(tele)-(5'-uridylyl)-L-histidyl-[protein] + diphosphate. It catalyses the reaction L-seryl-[protein] + UTP = O-(5'-uridylyl)-L-seryl-[protein] + diphosphate. It carries out the reaction L-tyrosyl-[protein] + UTP = O-(5'-uridylyl)-L-tyrosyl-[protein] + diphosphate. Nucleotidyltransferase involved in the post-translational modification of proteins. It can catalyze the addition of adenosine monophosphate (AMP) or uridine monophosphate (UMP) to a protein, resulting in modifications known as AMPylation and UMPylation. In Xylella fastidiosa (strain 9a5c), this protein is Protein nucleotidyltransferase YdiU.